Consider the following 1416-residue polypeptide: DNA-directed RNA polymerase subunit beta' (1416 aa).

Zn(2+) contacts are provided by cysteine 71, cysteine 73, cysteine 86, and cysteine 89. Aspartate 461, aspartate 463, and aspartate 465 together coordinate Mg(2+). Zn(2+) contacts are provided by cysteine 815, cysteine 889, cysteine 896, and cysteine 899.

This sequence belongs to the RNA polymerase beta' chain family. In terms of assembly, the RNAP catalytic core consists of 2 alpha, 1 beta, 1 beta' and 1 omega subunit. When a sigma factor is associated with the core the holoenzyme is formed, which can initiate transcription. Mg(2+) serves as cofactor. The cofactor is Zn(2+).

It carries out the reaction RNA(n) + a ribonucleoside 5'-triphosphate = RNA(n+1) + diphosphate. Functionally, DNA-dependent RNA polymerase catalyzes the transcription of DNA into RNA using the four ribonucleoside triphosphates as substrates. This Haemophilus influenzae (strain PittGG) protein is DNA-directed RNA polymerase subunit beta'.